We begin with the raw amino-acid sequence, 541 residues long: uncharacterized protein (541 aa).

An N-terminal signal peptide occupies residues 1–17; sequence MSFSATILFSPPSGSEA. Disordered stretches follow at residues 28–47 and 103–138; these read TSQG…TPIT and GKVC…SNSL. Basic and acidic residues predominate over residues 103–116; the sequence is GKVCTADEDRESRA. Thr118 is subject to Phosphothreonine. Residues Lys128 and Lys223 each participate in a glycyl lysine isopeptide (Lys-Gly) (interchain with G-Cter in SUMO2) cross-link. Ser226 is modified (phosphoserine). The segment covering 232–243 has biased composition (polar residues); the sequence is AIQRASSETGPE. The segment at 232–254 is disordered; sequence AIQRASSETGPESGTKLPATRPE. Phosphoserine is present on residues Ser286 and Ser429. A disordered region spans residues 494 to 526; it reads YNPNFQEDEGGGNEKGPVSPSYDQPHKTSCPDL.

It localises to the secreted. This is an uncharacterized protein from Mus musculus (Mouse).